A 707-amino-acid polypeptide reads, in one-letter code: Coiled-coil domain-containing protein 177 (707 aa).

Disordered stretches follow at residues 1 to 65 (MVDP…EGGR) and 183 to 294 (PSAG…SALT). Low complexity-rich tracts occupy residues 38–49 (AASSASASASAA), 183–215 (PSAGSSSSCSSASLPASPAPRAARKASPSPSSA), and 243–258 (ALSSESGASSSSYSGE). At Ser-311 the chain carries Phosphoserine. The stretch at 364 to 605 (GQWELQRVHA…LQHATQVAEE (242 aa)) forms a coiled coil. Disordered regions lie at residues 372–426 (HAKQ…RSEE), 454–581 (KLQQ…EREH), 597–637 (QHAT…RDED), and 652–707 (ERSE…LDRK). Composition is skewed to basic and acidic residues over residues 377-392 (REREEREKQRALEQGR), 399-426 (VEERRGRRGREEREAARRRQRQYERSEE), 454-484 (KLQQEQNLKQREEGLQEGRERAEQIRRERAQ), 491-514 (QRQEGQLQREKRELSRAERARHEA), 543-581 (ENYEHLVEQRTRELRERARREELQGRRAKEAAERKEREH), 618-637 (RLEKERAQRANKEKVERDED), and 652-664 (ERSEQLTRERRSA). Low complexity predominate over residues 665 to 675 (LESARSTARAS). The segment covering 677-707 (HVREKVREETNTRSFDRMVREAQLHASLDRK) has biased composition (basic and acidic residues).

The protein is Coiled-coil domain-containing protein 177 (CCDC177) of Homo sapiens (Human).